The chain runs to 391 residues: Phosphoglycerate kinase (391 aa).

Substrate contacts are provided by residues 21–23 (DLN), Arg-36, 59–62 (HLGR), Arg-113, and Arg-146. ATP contacts are provided by residues Lys-197, Glu-319, and 345 to 348 (GGDT).

It belongs to the phosphoglycerate kinase family. Monomer.

Its subcellular location is the cytoplasm. It catalyses the reaction (2R)-3-phosphoglycerate + ATP = (2R)-3-phospho-glyceroyl phosphate + ADP. It functions in the pathway carbohydrate degradation; glycolysis; pyruvate from D-glyceraldehyde 3-phosphate: step 2/5. This is Phosphoglycerate kinase from Xanthomonas oryzae pv. oryzae (strain PXO99A).